Reading from the N-terminus, the 399-residue chain is Fe-coproporphyrin III synthase (399 aa).

The region spanning 36 to 253 is the Radical SAM core domain; the sequence is KDKKPVVVWN…TRKLHEKGFP (218 aa). Residues Cys50, Cys54, and Cys57 each contribute to the [4Fe-4S] cluster site.

This sequence belongs to the radical SAM superfamily. [4Fe-4S] cluster is required as a cofactor.

It carries out the reaction 12,18-didecarboxysiroheme + 2 AH2 + 2 S-adenosyl-L-methionine = Fe-coproporphyrin III + 2 5'-deoxyadenosine + 2 L-methionine + 2 acetate + 2 A + 2 H(+). It participates in porphyrin-containing compound metabolism; protoheme biosynthesis. Involved in siroheme-dependent heme b biosynthesis. Catalyzes the conversion of didecarboxysiroheme into Fe-coproporphyrin III by oxidative loss of two acetic acid side chains. In Methanosarcina barkeri (strain Fusaro / DSM 804), this protein is Fe-coproporphyrin III synthase.